The following is a 573-amino-acid chain: Trehalose synthase (573 aa).

Asp-70 contacts substrate. Asn-112 contributes to the Ca(2+) binding site. Residues His-113 and Gln-178 each contribute to the substrate site. Asp-180 contributes to the Ca(2+) binding site. Arg-208 serves as a coordination point for substrate. Residue Asp-210 is the Nucleophile of the active site. Ca(2+) contacts are provided by Tyr-214, Leu-215, and Glu-217. Glu-252 functions as the Proton donor in the catalytic mechanism. Substrate is bound by residues His-326 and Asp-327.

The protein belongs to the glycosyl hydrolase 13 family. TreS subfamily.

The catalysed reaction is D-maltose = alpha,alpha-trehalose. In terms of biological role, catalyzes the reversible interconversion of maltose and alpha,alpha-trehalose by transglucosylation. This chain is Trehalose synthase (treS), found in Pimelobacter sp. (strain R48).